Reading from the N-terminus, the 81-residue chain is Putative membrane protein insertion efficiency factor (81 aa).

It belongs to the UPF0161 family.

The protein resides in the cell inner membrane. Functionally, could be involved in insertion of integral membrane proteins into the membrane. In Thermosipho melanesiensis (strain DSM 12029 / CIP 104789 / BI429), this protein is Putative membrane protein insertion efficiency factor.